The sequence spans 238 residues: uncharacterized protein (238 aa).

3 helical membrane passes run 75–95 (YAIF…HNFY), 116–136 (IVLI…FSLI), and 172–192 (IQGL…LEVI). Positions 200–238 (DVEMSSMRGQAITTEPASDNTMAEETDCNTSKDVESGSN) are disordered. The segment covering 206–220 (MRGQAITTEPASDNT) has biased composition (polar residues). Basic and acidic residues predominate over residues 229–238 (TSKDVESGSN).

The protein localises to the membrane. This is an uncharacterized protein from Schizosaccharomyces pombe (strain 972 / ATCC 24843) (Fission yeast).